A 136-amino-acid chain; its full sequence is Large ribosomal subunit protein uL16 (136 aa).

The protein belongs to the universal ribosomal protein uL16 family. In terms of assembly, part of the 50S ribosomal subunit.

Its function is as follows. Binds 23S rRNA and is also seen to make contacts with the A and possibly P site tRNAs. The polypeptide is Large ribosomal subunit protein uL16 (Bradyrhizobium diazoefficiens (strain JCM 10833 / BCRC 13528 / IAM 13628 / NBRC 14792 / USDA 110)).